Here is a 142-residue protein sequence, read N- to C-terminus: MKHGIKKNKLSRCTEHRLSMLKNLSISLINHEQIVTTLPKAKALRPYVEKFITIAKNNDSLHGRRLLLSRLHNSKLVVDKLLSVLANRYQDRKGGYSRIIKFGTRKGDCAPMAVIELVDRDISAKGEIYSKNKKGSKVVTQS.

Belongs to the bacterial ribosomal protein bL17 family. As to quaternary structure, part of the 50S ribosomal subunit. Contacts protein L32.

The chain is Large ribosomal subunit protein bL17 from Wolbachia pipientis subsp. Culex pipiens (strain wPip).